The sequence spans 606 residues: Mannan endo-1,4-beta-mannosidase A (606 aa).

The N-terminal stretch at Met1–Ser19 is a signal peptide. Residues Val22–Asn140 enclose the CBM6 domain. The region spanning Pro164–Asp458 is the GH26 domain. Trp285 is a substrate binding site. The Proton donor role is filled by Glu318. The substrate site is built by Trp323 and Tyr378. Residue Glu406 is the Nucleophile of the active site. The tract at residues Ser472–Ser489 is linker. 3 consecutive CBM10 domains span residues Glu491–Val527, Ser530–Val566, and Ser569–Leu605. Substrate is bound at residue Trp493.

It belongs to the glycosyl hydrolase 26 family.

The catalysed reaction is Random hydrolysis of (1-&gt;4)-beta-D-mannosidic linkages in mannans, galactomannans and glucomannans.. Functionally, hydrolyzes 1,4-beta linked polysaccharide backbones of mannans, one of the major hemicellulose components in hardwoods and softwoods. Shows very high activity against mannohexaose but not against mannopentaose and smaller mannooligosaccharides. The major products released from mannooligosaccharide hydrolysis are mannose and mannobiose. The reiterated 40 AA domain is involved in binding the cellulase-hemicellulase complex. The protein is Mannan endo-1,4-beta-mannosidase A (MANA) of Piromyces sp.